A 122-amino-acid polypeptide reads, in one-letter code: UPF0102 protein TTE1452 (122 aa).

Belongs to the UPF0102 family.

This chain is UPF0102 protein TTE1452, found in Caldanaerobacter subterraneus subsp. tengcongensis (strain DSM 15242 / JCM 11007 / NBRC 100824 / MB4) (Thermoanaerobacter tengcongensis).